The chain runs to 192 residues: Peptidyl-tRNA hydrolase (192 aa).

Position 17 (His-17) interacts with tRNA. Catalysis depends on His-22, which acts as the Proton acceptor. Residues Phe-68, Asn-70, and Asn-116 each coordinate tRNA.

Belongs to the PTH family. As to quaternary structure, monomer.

It localises to the cytoplasm. The catalysed reaction is an N-acyl-L-alpha-aminoacyl-tRNA + H2O = an N-acyl-L-amino acid + a tRNA + H(+). Hydrolyzes ribosome-free peptidyl-tRNAs (with 1 or more amino acids incorporated), which drop off the ribosome during protein synthesis, or as a result of ribosome stalling. In terms of biological role, catalyzes the release of premature peptidyl moieties from peptidyl-tRNA molecules trapped in stalled 50S ribosomal subunits, and thus maintains levels of free tRNAs and 50S ribosomes. This is Peptidyl-tRNA hydrolase from Stenotrophomonas maltophilia (strain K279a).